Reading from the N-terminus, the 302-residue chain is Sulfate adenylyltransferase subunit 2 (302 aa).

Residues 280–302 (RQGRVIDHDSSGSMEKKKREGYF) are disordered.

It belongs to the PAPS reductase family. CysD subfamily. Heterodimer composed of CysD, the smaller subunit, and CysN.

The enzyme catalyses sulfate + ATP + H(+) = adenosine 5'-phosphosulfate + diphosphate. It participates in sulfur metabolism; hydrogen sulfide biosynthesis; sulfite from sulfate: step 1/3. In terms of biological role, with CysN forms the ATP sulfurylase (ATPS) that catalyzes the adenylation of sulfate producing adenosine 5'-phosphosulfate (APS) and diphosphate, the first enzymatic step in sulfur assimilation pathway. APS synthesis involves the formation of a high-energy phosphoric-sulfuric acid anhydride bond driven by GTP hydrolysis by CysN coupled to ATP hydrolysis by CysD. This chain is Sulfate adenylyltransferase subunit 2, found in Shewanella amazonensis (strain ATCC BAA-1098 / SB2B).